A 206-amino-acid polypeptide reads, in one-letter code: Small ribosomal subunit protein uS4 (206 aa).

The region spanning 98-163 (MRLDNVVYRL…SEKFKTFVEN (66 aa)) is the S4 RNA-binding domain.

This sequence belongs to the universal ribosomal protein uS4 family. As to quaternary structure, part of the 30S ribosomal subunit. Contacts protein S5. The interaction surface between S4 and S5 is involved in control of translational fidelity.

One of the primary rRNA binding proteins, it binds directly to 16S rRNA where it nucleates assembly of the body of the 30S subunit. In terms of biological role, with S5 and S12 plays an important role in translational accuracy. In Clostridium botulinum (strain Alaska E43 / Type E3), this protein is Small ribosomal subunit protein uS4.